We begin with the raw amino-acid sequence, 1210 residues long: MEFDFFSFVAPSRVQSLVLPFGRVRRKSFSSYLQLLRRVSHIQLSDVPVATATRKSSSFNPLAFPLGRLVYNFLTSLDDQQALLEEFEYFRRVFVLIGIVDGSEEQEVEQLCSTLDVWRRRIPHALVAKCIVFNCPEDKENIFNAPNIIIGPRSDFSINSVMRSILCDITAELLEGFSSLEFSIHARSVILSPITDMPHLAPLQRKNSNASIHSLGSSSRPTLTRTPSITSRSVNSVTERSKSLSKGRIENQFGQLYLLAGRVPNALKHFSTAIALSKATGDFLWQGLSLELFTVCLVIMAHLHVDVQIPPNILSMFPSYNDRLNAFGPLKFDALLNFITEMRNVVDQLYQKSTLQPNDAVPGLCFSESILRYAHLLTVVYSCKGFNDNALDHIIAQAPIRPVKKATTYVPNKATICQWIMRAQGQHLNSLSIRERCRIYGAMANMLGSIGFSRLRVKMLRELVASLTPVLLETRRQNASKNGIHPEVIASHTAQSFKSTHYCNILPLISEICQEYGLLKTDGSLLNPELTKWGWSNLQFDVLNELISLCDSLSDYRSILLLISLFFLTSVQTASSSQQISMFKAFRKTYLFASNAGIHINAPYWDPFMITDLKFIGSSENAELIHQRLRNGLPKSIEKGPFIYNPFNRRQDQNQSKSVLVVDEQVAFSIYFRNPLSVSVEVQDVHLETKGVSAKCSHSTFTMRPLSIERTTLTVTPTETGELHIVGCRVKVFGCEPILQYVYEAKDKHKSLHVYLEKSKDVNAELRSLDTIDHLWTYFPFKKDLKTKSFDCIVIASQPKLSLAFQNLTSGKFNFAEYETGELVYVIENTSFVEASHISVLFEDSSSKAFEQAIADKSITADRLYELQFEEFNLPTFTVESSQPFSLSPGERREIHIKIRAKPNSQEGLILFESSVHKPEDTEFYVRRLRIPVSLNISKRVDLKQWSAFMDTEGDPSYCLVLLNFYNHFSEPLFVTVKTASTDESRSVLIKPKADNVILFRLKRFIMSSEEINLDIPNLSTKQFVLSSGFKKSIEDSYTMKKRFWIKEYFLKEVQASWKTDDNLHHGEIYLRNHILSDEMANNLSILPIRIQAWVSYDSEKVTTVCPREPFKLVLEFFGHADTNMRYKISWTQLNTQANTSSFNGLILDGPEEDIVCFNNSKCHVVIERNMFAYTTGMYNIFVRIFNEELQLLSQPVDLDEPILLIVDAK.

A disordered region spans residues 211-243 (SIHSLGSSSRPTLTRTPSITSRSVNSVTERSKS). The segment covering 214-233 (SLGSSSRPTLTRTPSITSRS) has biased composition (low complexity).

The protein belongs to the TRS120 family. As to quaternary structure, part of the multisubunit TRAPP (transport protein particle) II complex.

The protein localises to the golgi apparatus. Its subcellular location is the cis-Golgi network. Component of the TRAPP II complex. TRAPP II seems to play a role in intra-Golgi transport. The polypeptide is Transport protein particle subunit trs120 (trs120) (Schizosaccharomyces pombe (strain 972 / ATCC 24843) (Fission yeast)).